The chain runs to 60 residues: Large ribosomal subunit protein uL30 (60 aa).

This sequence belongs to the universal ribosomal protein uL30 family. In terms of assembly, part of the 50S ribosomal subunit.

This chain is Large ribosomal subunit protein uL30, found in Shewanella sp. (strain MR-7).